The following is a 344-amino-acid chain: Selenide, water dikinase (344 aa).

C16 is an active-site residue. Residues K19 and 47–49 contribute to the ATP site; that span reads SRD. D50 provides a ligand contact to Mg(2+). Residues D67, D90, and 138–140 each bind ATP; that span reads GHS. D90 provides a ligand contact to Mg(2+). A Mg(2+)-binding site is contributed by D226.

Belongs to the selenophosphate synthase 1 family. Class I subfamily. In terms of assembly, homodimer. Requires Mg(2+) as cofactor.

It carries out the reaction hydrogenselenide + ATP + H2O = selenophosphate + AMP + phosphate + 2 H(+). Functionally, synthesizes selenophosphate from selenide and ATP. The sequence is that of Selenide, water dikinase from Pseudomonas putida (strain ATCC 47054 / DSM 6125 / CFBP 8728 / NCIMB 11950 / KT2440).